The sequence spans 508 residues: 2,3-bisphosphoglycerate-independent phosphoglycerate mutase (508 aa).

2 residues coordinate Mn(2+): Asp9 and Ser59. The Phosphoserine intermediate role is filled by Ser59. Residues His120, 149–150 (RD), Arg181, Arg187, 254–257 (RADR), and Lys331 each bind substrate. Mn(2+) contacts are provided by Asp398, His402, Asp439, His440, and His456.

This sequence belongs to the BPG-independent phosphoglycerate mutase family. Requires Mn(2+) as cofactor.

It catalyses the reaction (2R)-2-phosphoglycerate = (2R)-3-phosphoglycerate. It functions in the pathway carbohydrate degradation; glycolysis; pyruvate from D-glyceraldehyde 3-phosphate: step 3/5. Its function is as follows. Catalyzes the interconversion of 2-phosphoglycerate and 3-phosphoglycerate. The chain is 2,3-bisphosphoglycerate-independent phosphoglycerate mutase from Halobacterium salinarum (strain ATCC 700922 / JCM 11081 / NRC-1) (Halobacterium halobium).